Here is a 292-residue protein sequence, read N- to C-terminus: S-methyl-5'-thioadenosine phosphorylase (292 aa).

Residues S11, 53–54, and 86–87 contribute to the phosphate site; these read RH and SA. M184 serves as a coordination point for substrate. Residue T185 participates in phosphate binding. 208–210 is a substrate binding site; the sequence is DYD.

Belongs to the PNP/MTAP phosphorylase family. MTAP subfamily. In terms of assembly, homohexamer. Dimer of a homotrimer.

It catalyses the reaction S-methyl-5'-thioadenosine + phosphate = 5-(methylsulfanyl)-alpha-D-ribose 1-phosphate + adenine. Its pathway is amino-acid biosynthesis; L-methionine biosynthesis via salvage pathway; S-methyl-5-thio-alpha-D-ribose 1-phosphate from S-methyl-5'-thioadenosine (phosphorylase route): step 1/1. Catalyzes the reversible phosphorylation of S-methyl-5'-thioadenosine (MTA) to adenine and 5-methylthioribose-1-phosphate. Involved in the breakdown of MTA, a major by-product of polyamine biosynthesis. Responsible for the first step in the methionine salvage pathway after MTA has been generated from S-adenosylmethionine. Has broad substrate specificity with 6-aminopurine nucleosides as preferred substrates. The chain is S-methyl-5'-thioadenosine phosphorylase from Koribacter versatilis (strain Ellin345).